Reading from the N-terminus, the 422-residue chain is Putative FBD-associated F-box protein At1g55030 (422 aa).

Positions 8–60 constitute an F-box domain; sequence TDMISQLPEPLILQILGSLPTKVAITTSVLSKQWQSHWKMMPKLEFDSFLRRL. LRR repeat units lie at residues 132 to 153, 154 to 175, and 180 to 201; these read TLET…VYLK, SLKT…INLL, and NLQD…TIAV. The region spanning 342–391 is the FBD domain; sequence EWNQPKNVPECLHHLEKFIWEGYKWKREEIEVAKYILKNTNRLKRAIFSL.

The sequence is that of Putative FBD-associated F-box protein At1g55030 from Arabidopsis thaliana (Mouse-ear cress).